A 274-amino-acid chain; its full sequence is MVVRIYNPCTPGTRHRSVNDFSGVANSKYRKNLSFFLHRSKGRNNRGVITNRNLGGGHKRLFRKIEFKRDKFSIFGKVLSIEYDPNRSSRIALVIYSDGIKRYIIQPLNLVIGNKIISDFHTTIDIGNALPVNFIPLGTLVHNVEFKPGNGGKIARAAGAFSKIIAKDKNFVSLSMPSGETRLIENSCWATIGQVGNLDFYNVILGKAGRNRWLGNNPSVRGIAMNPCDHPHGGGEGRSPIGRSKPLTPWGKIALGKRTRKPKRYSNKYILSRK.

Positions 230 to 252 are disordered; that stretch reads HPHGGGEGRSPIGRSKPLTPWGK.

It belongs to the universal ribosomal protein uL2 family. In terms of assembly, part of the 50S ribosomal subunit.

The protein resides in the plastid. This Euglena longa (Euglenophycean alga) protein is Large ribosomal subunit protein uL2c (rpl2).